A 413-amino-acid chain; its full sequence is MKLLGWMHRKLRQNSNDVFKEFNNAAGGTCNCITGLAASDPATFLATANEYFTADNDFTNNHPSSPAADLFTFGGSGLLTIGTLGIAAVAVSADADEVDYDVDADADSDFDDNDDTAGDDEDQVDSAVTPTFTYAAPPPIEDATVVEKAAVAVVEAIAEKDDDTTTEDDLMVVSAELEKVLGGRNSGTAGDLVASARVSFAMGVDCPLQGFLFGSPVSDAESRLEQPRDSNGGRRTSLGELFMRTRFAEEKVALVAVEEGEDGGDIGAGGERDDRKAGKGGGGHKTTKKRSAKDEKVPRGDGAQASATVTKSKFHKILQIFHRKVYPESAALARNLTKKSRKRGSGAYHKPEPAASKLRCLKEQRAPGFGCCASRASFGGAASPIDGDDDDELNGSKSGHWIKTDAEYLVLEL.

Residues 71–91 form a helical membrane-spanning segment; sequence FTFGGSGLLTIGTLGIAAVAV. Residues 103-124 show a composition bias toward acidic residues; the sequence is DADADSDFDDNDDTAGDDEDQV. Disordered regions lie at residues 103–127 and 261–308; these read DADA…VDSA and EDGG…ASAT. 2 consecutive short sequence motifs (nuclear localization signal) follow at residues 275 to 298 and 338 to 345; these read RKAG…EKVP and KKSRKRGS.

This sequence belongs to the LAZY family. As to expression, expressed in the node of the stem, initiating leaf founder cells, young leaf primordia, tips of axillary meristems, spikelet pair meristems of developing tassels and ears, male flower primordia, tassels, ears, silks and seeds. Expressed in leaf sheaths, leaf pulvinus and shoot apical meristem (SAM).

It localises to the cell membrane. The protein localises to the nucleus. Its function is as follows. Involved in the regulation of shoot gravitropism, and tassel and ear development through the regulation of polar auxin transport (PAT) and auxin signaling. Acts as a negative regulator of basipetal PAT, but positive regulator of lateral auxin transport. Involved in the regulation of shoot gravitropism and leaf angle through the regulation of cell development. This chain is Protein LAZY 1, found in Zea mays (Maize).